Reading from the N-terminus, the 995-residue chain is Endosome/lysosome-associated apoptosis and autophagy regulator family member 2 (995 aa).

Residues 1–21 (MGVFCWSGCLVISLQLLLGAA) form the signal peptide. The Extracellular portion of the chain corresponds to 22-895 (LDNLSTCKEE…ACESIDFWLK (874 aa)). 9 N-linked (GlcNAc...) asparagine glycosylation sites follow: Asn-24, Asn-136, Asn-245, Asn-372, Asn-527, Asn-649, Asn-683, Asn-700, and Asn-758. The 205-residue stretch at 639-843 (SECLVTYTNE…LWETAEACPL (205 aa)) folds into the MRH domain. 2 cysteine pairs are disulfide-bonded: Cys-641–Cys-687 and Cys-697–Cys-725. 2 disulfide bridges follow: Cys-793–Cys-829 and Cys-805–Cys-841. N-linked (GlcNAc...) asparagine glycosylation occurs at Asn-883. The helical transmembrane segment at 896-916 (VGAGVGAFTAVLLIALTCYFW) threads the bilayer. Residues 917–995 (KKNQKLEYKY…QLKSSRAQNI (79 aa)) are Cytoplasmic-facing.

The protein belongs to the ELAPOR family. Expressed in the animal half of the embryo during gastrulation, becoming restricted to the ventral ectoderm at stage 12.5. At the neurula stage, expressed in the anterior ectoderm surrounding the neural plate, and weakly in the epidermis. Expression is especially high in the presumptive hatching gland and cement gland regions. Surprisingly, by the tailbud stage (stage 22), expression is limited to the hatching gland and is not seen in the cement gland. Conversely, in tadpoles expressed broadly in the head, heart and fin. Expression in the head is seen in the primary mouth and in the brain, eyes, otic vesicles and olfactory pits.

It localises to the cell membrane. Its function is as follows. Functions as a regulator of the BMP signaling pathway and is involved in epidermal differentiation. This is Endosome/lysosome-associated apoptosis and autophagy regulator family member 2 (elapor2) from Xenopus laevis (African clawed frog).